The following is a 106-amino-acid chain: P4 prophage-derived uncharacterized protein t2655 (106 aa).

This is P4 prophage-derived uncharacterized protein t2655 from Salmonella typhi.